A 325-amino-acid polypeptide reads, in one-letter code: NADH-quinone oxidoreductase subunit H (325 aa).

8 consecutive transmembrane segments (helical) span residues 11 to 31 (ILISVLKAVVILLVVVTCGAF), 81 to 101 (AIFTLAPVIAFTSLLLSFAIV), 114 to 134 (IGILFFLMMAGLAVYAVLFAG), 154 to 174 (LSYEVFLGLSLMGVVAQAGSF), 186 to 206 (VWNVIPQFFGFVTFAIAGVAV), 237 to 257 (FFVGEYIGIVTVSALIVTLFF), 265 to 285 (LPPFIWFALKTAFFMVMFILI), and 304 to 324 (VCLPLTLLNLLATAAVILYNA).

It belongs to the complex I subunit 1 family. NDH-1 is composed of 13 different subunits. Subunits NuoA, H, J, K, L, M, N constitute the membrane sector of the complex.

Its subcellular location is the cell inner membrane. It carries out the reaction a quinone + NADH + 5 H(+)(in) = a quinol + NAD(+) + 4 H(+)(out). In terms of biological role, NDH-1 shuttles electrons from NADH, via FMN and iron-sulfur (Fe-S) centers, to quinones in the respiratory chain. The immediate electron acceptor for the enzyme in this species is believed to be ubiquinone. Couples the redox reaction to proton translocation (for every two electrons transferred, four hydrogen ions are translocated across the cytoplasmic membrane), and thus conserves the redox energy in a proton gradient. This subunit may bind ubiquinone. This chain is NADH-quinone oxidoreductase subunit H, found in Yersinia enterocolitica serotype O:8 / biotype 1B (strain NCTC 13174 / 8081).